A 215-amino-acid polypeptide reads, in one-letter code: Protein C' (215 aa).

A disordered region spans residues 12–34 (MPSFLKKILKLRGRRQEDESRSR). Positions 15–22 (FLKKILKL) are involved in self-degradation and in host STAT1 degradation. The span at 25-35 (RRQEDESRSRM) shows a compositional bias: basic and acidic residues. A compositionally biased stretch (polar residues) spans 36-66 (LSDSSTQSYQVNQLTSEETEAGSTIPSTPSK).

Belongs to the respirovirus protein C family. In terms of assembly, the different isoforms interact (via C-terminus) with unphosphorylated and phosphorylated human STAT1 (via N-terminus), favoring the formation of parallel STAT1 homodimers. The different isoforms do not interact with host STAT2. C protein interacts with L protein; this interaction has an inhibitory effect on viral transcription and replication. Protein Y1 is produced not only by alternative initiation, but also by proteolytic cleavage of C'. Only alternative initiation is detected in vitro, whereas in vivo cleavage seems to be predominant.

The protein resides in the host cytoplasm. In terms of biological role, the different products prevent the establishment of cellular antiviral state by blocking the interferon-alpha/beta (IFN-alpha/beta) and IFN-gamma signaling pathways. They inhibit IFN-alpha/beta induced tyrosine phosphorylation of STAT1 and STAT2. Blocking the IFN-alpha/beta pathway requires binding to STAT1 in the cytoplasm. They inhibit IFN-gamma induced serine phosphorylation of STAT1. Block the IFN-gamma pathway by binding to and stabilizing the parallel form of the STAT1 dimer, further inducing high-molecular-weight complex formation and inhibition of transcription by IFN-gamma. May also have a role in preventing the cell to enter apoptosis. Modulate regulation of viral transcription and replication. Overexpression inhibits the viral RNA polymerase. The absence of all C', C and Y1 proteins leads to viral delayed growth. Plays an important role in virion particles release. Modulates virion shape. This chain is Protein C' (P/V/C), found in Cavia cutleri (Guinea pig).